The primary structure comprises 259 residues: Snake venom serine proteinase 2 (259 aa).

The first 18 residues, 1 to 18, serve as a signal peptide directing secretion; sequence MVLIRVLANLLILQLSYA. The propeptide occupies 19-24; the sequence is QKSSEL. The Peptidase S1 domain occupies 25 to 250; the sequence is IFGGRPCNRN…HLDWIQSIIA (226 aa). Disulfide bonds link cysteine 31/cysteine 162, cysteine 49/cysteine 65, cysteine 97/cysteine 257, cysteine 141/cysteine 211, cysteine 173/cysteine 190, and cysteine 201/cysteine 226. Catalysis depends on charge relay system residues histidine 64 and aspartate 109. The Charge relay system role is filled by serine 205.

It belongs to the peptidase S1 family. Snake venom subfamily. Monomer. In terms of tissue distribution, expressed by the venom gland.

It localises to the secreted. In terms of biological role, snake venom serine protease that may act in the hemostasis system of the prey. This Crotalus adamanteus (Eastern diamondback rattlesnake) protein is Snake venom serine proteinase 2.